Consider the following 636-residue polypeptide: 1-deoxy-D-xylulose-5-phosphate synthase (636 aa).

Residues histidine 74 and 115-117 (GHS) each bind thiamine diphosphate. Mg(2+) is bound at residue aspartate 146. Thiamine diphosphate-binding positions include 147-148 (GA), asparagine 175, tyrosine 286, and glutamate 367. Mg(2+) is bound at residue asparagine 175.

The protein belongs to the transketolase family. DXPS subfamily. As to quaternary structure, homodimer. Mg(2+) is required as a cofactor. Thiamine diphosphate serves as cofactor.

It catalyses the reaction D-glyceraldehyde 3-phosphate + pyruvate + H(+) = 1-deoxy-D-xylulose 5-phosphate + CO2. Its pathway is metabolic intermediate biosynthesis; 1-deoxy-D-xylulose 5-phosphate biosynthesis; 1-deoxy-D-xylulose 5-phosphate from D-glyceraldehyde 3-phosphate and pyruvate: step 1/1. Functionally, catalyzes the acyloin condensation reaction between C atoms 2 and 3 of pyruvate and glyceraldehyde 3-phosphate to yield 1-deoxy-D-xylulose-5-phosphate (DXP). This Halothermothrix orenii (strain H 168 / OCM 544 / DSM 9562) protein is 1-deoxy-D-xylulose-5-phosphate synthase.